The chain runs to 105 residues: Signal peptidase complex subunit 1 (105 aa).

The Cytoplasmic segment spans residues 1–32 (MDGMIAMLPAPLQKLSSHIDFQGQKVAERTYQ). A helical membrane pass occupies residues 33–53 (VILTIAGIIGFLVGFWTQQLS). The Lumenal segment spans residues 54–56 (YAM). The chain crosses the membrane as a helical span at residues 57–77 (FTVLGASAFTALIILPPWPFL). Residues 78-105 (FRKNPIVWHTPAEPQESGDKKKETKKTK) lie on the Cytoplasmic side of the membrane.

It belongs to the SPCS1 family. Component of the signal peptidase complex (SPC) composed of a catalytic subunit sec-11 and three accessory subunits spcs-1, spcs-2 and spcs-3. The complex induces a local thinning of the ER membrane which is used to measure the length of the signal peptide (SP) h-region of protein substrates. This ensures the selectivity of the complex towards h-regions shorter than 18-20 amino acids.

The protein resides in the endoplasmic reticulum membrane. Its function is as follows. Component of the signal peptidase complex (SPC) which catalyzes the cleavage of N-terminal signal sequences from nascent proteins as they are translocated into the lumen of the endoplasmic reticulum. Dispensable for SPC enzymatic activity. The sequence is that of Signal peptidase complex subunit 1 from Caenorhabditis elegans.